A 486-amino-acid polypeptide reads, in one-letter code: Citrate synthase 3, mitochondrial (486 aa).

A mitochondrion-targeting transit peptide spans methionine 1–lysine 23. Active-site residues include histidine 315, histidine 361, and aspartate 419. The short motif at asparagine 484–leucine 486 is the Microbody targeting signal element.

It belongs to the citrate synthase family.

It localises to the mitochondrion. It carries out the reaction oxaloacetate + acetyl-CoA + H2O = citrate + CoA + H(+). It participates in carbohydrate metabolism; tricarboxylic acid cycle; isocitrate from oxaloacetate: step 1/2. Functionally, dual specificity mitochondrial citrate and methylcitrate synthase with similar catalytic efficiency with both acetyl-CoA and propionyl-CoA. This is Citrate synthase 3, mitochondrial from Saccharomyces cerevisiae (strain ATCC 204508 / S288c) (Baker's yeast).